We begin with the raw amino-acid sequence, 331 residues long: MPLKGKHLIDPDQLTFNEIHEIINLGLDMEQNPAKYSKVCEGKILGTMFFEPSTRTRLSFESAMLRMGGTVLGFSDVTTSSVTKGESVADTIRVLDDYADILVMRHPVAGTPREASQYSTVPVINGGDGGHQHPTQTLTDLITIQKYHGEIRGLKVAFCGDLLFGRTVHSLLKTLSRFPDMEFILISPPELPIPEDLKTEVIEKYNVKITETDSLEKHMAEIDILYMTRIQKERFLNQEDYEKLKDSYILTNSLLENAKQDLIILHPLPRVNEIHTEVDRDPRAKYFEQAKMGVYVRMALMALLLGNIEIAAPTLTLKVKNGTIMTKFIAS.

Carbamoyl phosphate-binding residues include Arg55 and Thr56. Lys84 provides a ligand contact to L-aspartate. Carbamoyl phosphate-binding residues include Arg105, His133, and Gln136. Residues Arg166 and Arg229 each coordinate L-aspartate. Residues Leu268 and Pro269 each coordinate carbamoyl phosphate.

The protein belongs to the aspartate/ornithine carbamoyltransferase superfamily. ATCase family. As to quaternary structure, heterododecamer (2C3:3R2) of six catalytic PyrB chains organized as two trimers (C3), and six regulatory PyrI chains organized as three dimers (R2).

The catalysed reaction is carbamoyl phosphate + L-aspartate = N-carbamoyl-L-aspartate + phosphate + H(+). It participates in pyrimidine metabolism; UMP biosynthesis via de novo pathway; (S)-dihydroorotate from bicarbonate: step 2/3. Catalyzes the condensation of carbamoyl phosphate and aspartate to form carbamoyl aspartate and inorganic phosphate, the committed step in the de novo pyrimidine nucleotide biosynthesis pathway. The protein is Aspartate carbamoyltransferase catalytic subunit of Alkaliphilus oremlandii (strain OhILAs) (Clostridium oremlandii (strain OhILAs)).